Reading from the N-terminus, the 335-residue chain is Biotin synthase (335 aa).

The region spanning 46-274 (YKVQLASLFS…KSKIRLSAGR (229 aa)) is the Radical SAM core domain. Positions 61, 65, and 68 each coordinate [4Fe-4S] cluster. [2Fe-2S] cluster-binding residues include Cys-105, Cys-137, Cys-197, and Arg-269.

This sequence belongs to the radical SAM superfamily. Biotin synthase family. In terms of assembly, homodimer. Requires [4Fe-4S] cluster as cofactor. The cofactor is [2Fe-2S] cluster.

It catalyses the reaction (4R,5S)-dethiobiotin + (sulfur carrier)-SH + 2 reduced [2Fe-2S]-[ferredoxin] + 2 S-adenosyl-L-methionine = (sulfur carrier)-H + biotin + 2 5'-deoxyadenosine + 2 L-methionine + 2 oxidized [2Fe-2S]-[ferredoxin]. It functions in the pathway cofactor biosynthesis; biotin biosynthesis; biotin from 7,8-diaminononanoate: step 2/2. Functionally, catalyzes the conversion of dethiobiotin (DTB) to biotin by the insertion of a sulfur atom into dethiobiotin via a radical-based mechanism. This Prochlorococcus marinus subsp. pastoris (strain CCMP1986 / NIES-2087 / MED4) protein is Biotin synthase.